We begin with the raw amino-acid sequence, 146 residues long: Ferredoxin-type protein FwdE (146 aa).

4Fe-4S ferredoxin-type domains lie at 90–115 (IKLF…TLDN) and 116–145 (FTVG…FIKE). Positions 125, 128, 131, and 135 each coordinate [4Fe-4S] cluster.

It depends on [4Fe-4S] cluster as a cofactor.

The sequence is that of Ferredoxin-type protein FwdE (fwdE) from Methanocaldococcus jannaschii (strain ATCC 43067 / DSM 2661 / JAL-1 / JCM 10045 / NBRC 100440) (Methanococcus jannaschii).